The sequence spans 673 residues: G-protein-signaling modulator 1 (673 aa).

A mediates association with membranes region spans residues Met-1–Arg-507. TPR repeat units lie at residues Cys-28–Asp-61, Ser-66–Ile-99, Ala-106–Gln-139, Ala-146–Val-178, Glu-180–Leu-199, Gly-206–Phe-239, Arg-246–Leu-279, Ala-286–Leu-319, and Gly-326–Ile-359. Positions Asp-361–Ile-485 are interaction with STK11/LKB1. A Phosphoserine modification is found at Ser-410. Arg-418 is subject to Omega-N-methylarginine. The span at Pro-420–Gly-439 shows a compositional bias: basic and acidic residues. The tract at residues Pro-420 to Asp-475 is disordered. Phosphoserine occurs at positions 442, 467, 469, 490, and 491. A compositionally biased stretch (basic and acidic residues) spans Lys-451–Ser-467. The 23-residue stretch at Glu-493–Leu-515 folds into the GoLoco 1 domain. A disordered region spans residues Met-508 to Val-531. Positions Glu-516–Ala-528 are enriched in low complexity. A phosphoserine mark is found at Ser-543 and Ser-567. 3 consecutive GoLoco domains span residues Thr-546 to Val-568, Gly-594 to Pro-616, and Asp-628 to Leu-650. The disordered stretch occupies residues Asp-644 to Ser-673. Ser-653 carries the post-translational modification Phosphoserine. Residues Pro-664–Ser-673 are compositionally biased toward polar residues.

Belongs to the GPSM family. As to quaternary structure, interacts with GNAI1 and GNAI2 preferentially in their GDP-bound state. May also interact with GNAO1. Interacts with INSC/inscuteable and FRMPD1. Interacts with GNAI3. Interacts with STK11/LKB1 and MACF1. Phosphorylation regulates interaction with G(i/o) alpha. As to expression, expressed in neural progenitor cells (at protein level).

The protein resides in the cytoplasm. It is found in the cytosol. Its subcellular location is the endoplasmic reticulum membrane. It localises to the golgi apparatus membrane. The protein localises to the cell membrane. Guanine nucleotide dissociation inhibitor (GDI) which functions as a receptor-independent activator of heterotrimeric G-protein signaling. Keeps G(i/o) alpha subunit in its GDP-bound form thus uncoupling heterotrimeric G-proteins signaling from G protein-coupled receptors. Controls spindle orientation and asymmetric cell fate of cerebral cortical progenitors. May also be involved in macroautophagy in intestinal cells. May play a role in drug addiction. This Mus musculus (Mouse) protein is G-protein-signaling modulator 1 (Gpsm1).